Here is a 354-residue protein sequence, read N- to C-terminus: Phosphate acyltransferase (354 aa).

This sequence belongs to the PlsX family. In terms of assembly, homodimer. Probably interacts with PlsY.

The protein resides in the cytoplasm. It catalyses the reaction a fatty acyl-[ACP] + phosphate = an acyl phosphate + holo-[ACP]. It functions in the pathway lipid metabolism; phospholipid metabolism. Catalyzes the reversible formation of acyl-phosphate (acyl-PO(4)) from acyl-[acyl-carrier-protein] (acyl-ACP). This enzyme utilizes acyl-ACP as fatty acyl donor, but not acyl-CoA. The chain is Phosphate acyltransferase from Ralstonia nicotianae (strain ATCC BAA-1114 / GMI1000) (Ralstonia solanacearum).